Consider the following 496-residue polypeptide: Glutelin type-A 3 (496 aa).

A signal peptide spans 1 to 24; sequence MATIKFPIVFSVVCLFLLCNGSLA. 2 disulfide bridges follow: Cys-45–Cys-78 and Cys-121–Cys-312. 2 consecutive Cupin type-1 domains span residues 50–248 and 318–467; these read LQAF…GVAR and QNID…EEAR.

The protein belongs to the 11S seed storage protein (globulins) family. Hexamer; each subunit is composed of an acidic and a basic chain derived from a single precursor and linked by a disulfide bond.

Seed storage protein. The protein is Glutelin type-A 3 (GLUA3) of Oryza sativa subsp. japonica (Rice).